The primary structure comprises 540 residues: DNA-(apurinic or apyrimidinic site) endonuclease (540 aa).

Mg(2+) is bound by residues Asn206 and Glu239. The interval 256 to 276 (NNKVYGGKKNEGEERNRGSVK) is disordered. The span at 263–276 (KKNEGEERNRGSVK) shows a compositional bias: basic and acidic residues. Mg(2+) is bound by residues Asp400, Asn402, Asp530, and His531. His531 functions as the Proton acceptor in the catalytic mechanism.

It belongs to the DNA repair enzymes AP/ExoA family. It depends on Mg(2+) as a cofactor. Requires Mn(2+) as cofactor. May be proteolytically cleaved.

The protein localises to the mitochondrion. It catalyses the reaction Exonucleolytic cleavage in the 3'- to 5'-direction to yield nucleoside 5'-phosphates.. Functionally, multifunctional protein that plays a central role in mitochondrial DNA base excision repair pathway induced by oxidative stress. Has apurinic/apyrimidinic (AP) endonuclease activity towards double-stranded DNA (dsDNA). Has nucleotide incision repair (NIR) activity; acts on dsDNA with oxidized bases thymine glycol and 5,6-dihydro-2'-deoxyuridine. Has 3'-5' exonuclease; can use dsDNA templates with 3'-OH termini including blunt-end, gapped and mismatched 3'-recessed. Has 3'-phosphatase activity; cleaves 3'-phosphate from blunt, recessed and gapped dsDNA templates, followed by 3'-5' exonuclease activity. Has RNase H-like activity; cleaves RNA on 3'-recessed RNA-DNA duplex. Plays a role in merosome infection of host erythrocytes. The polypeptide is DNA-(apurinic or apyrimidinic site) endonuclease (Plasmodium berghei (strain Anka)).